A 417-amino-acid chain; its full sequence is Gamma-glutamyl phosphate reductase (417 aa).

Belongs to the gamma-glutamyl phosphate reductase family.

Its subcellular location is the cytoplasm. It carries out the reaction L-glutamate 5-semialdehyde + phosphate + NADP(+) = L-glutamyl 5-phosphate + NADPH + H(+). It participates in amino-acid biosynthesis; L-proline biosynthesis; L-glutamate 5-semialdehyde from L-glutamate: step 2/2. Its function is as follows. Catalyzes the NADPH-dependent reduction of L-glutamate 5-phosphate into L-glutamate 5-semialdehyde and phosphate. The product spontaneously undergoes cyclization to form 1-pyrroline-5-carboxylate. This Haemophilus influenzae (strain ATCC 51907 / DSM 11121 / KW20 / Rd) protein is Gamma-glutamyl phosphate reductase.